The primary structure comprises 489 residues: Diaminopimelate decarboxylase 2, chloroplastic (489 aa).

A chloroplast-targeting transit peptide spans 1–50 (MAAVTQFLSQPSSIRGTLNQYQLNQTSLSRIPFLSLKSTLKPLKRLSVKA). The residue at position 51 (Ala-51) is an N-acetylalanine. Lys-130 bears the N6-(pyridoxal phosphate)lysine mark. Pyridoxal 5'-phosphate contacts are provided by residues Gly-309 and 345–348 (EPGR). Positions 348, 384, and 388 each coordinate substrate. The Proton donor role is filled by Cys-416. Substrate-binding residues include Glu-417 and Tyr-445. Tyr-445 contributes to the pyridoxal 5'-phosphate binding site.

The protein belongs to the Orn/Lys/Arg decarboxylase class-II family. LysA subfamily. In terms of assembly, homodimer. Pyridoxal 5'-phosphate serves as cofactor.

It is found in the plastid. It localises to the chloroplast. The enzyme catalyses meso-2,6-diaminopimelate + H(+) = L-lysine + CO2. The protein operates within amino-acid biosynthesis; L-lysine biosynthesis via DAP pathway; L-lysine from DL-2,6-diaminopimelate: step 1/1. Specifically catalyzes the decarboxylation of meso-diaminopimelate (meso-DAP) to L-lysine. The sequence is that of Diaminopimelate decarboxylase 2, chloroplastic (LYSA2) from Arabidopsis thaliana (Mouse-ear cress).